The following is a 277-amino-acid chain: 3-methyl-2-oxobutanoate hydroxymethyltransferase (277 aa).

Residues Asp-43 and Asp-82 each contribute to the Mg(2+) site. Residues 43 to 44, Asp-82, and Lys-112 contribute to the 3-methyl-2-oxobutanoate site; that span reads DS. Mg(2+) is bound at residue Glu-114. The active-site Proton acceptor is Glu-181.

It belongs to the PanB family. In terms of assembly, homodecamer; pentamer of dimers. Mg(2+) is required as a cofactor.

It is found in the cytoplasm. It carries out the reaction 3-methyl-2-oxobutanoate + (6R)-5,10-methylene-5,6,7,8-tetrahydrofolate + H2O = 2-dehydropantoate + (6S)-5,6,7,8-tetrahydrofolate. The protein operates within cofactor biosynthesis; (R)-pantothenate biosynthesis; (R)-pantoate from 3-methyl-2-oxobutanoate: step 1/2. In terms of biological role, catalyzes the reversible reaction in which hydroxymethyl group from 5,10-methylenetetrahydrofolate is transferred onto alpha-ketoisovalerate to form ketopantoate. The sequence is that of 3-methyl-2-oxobutanoate hydroxymethyltransferase from Exiguobacterium sp. (strain ATCC BAA-1283 / AT1b).